The following is a 373-amino-acid chain: Putative gustatory receptor 10b (373 aa).

Over Met1–Arg8 the chain is Cytoplasmic. A helical membrane pass occupies residues Leu9–Asn29. Residues Pro30–Ser82 lie on the Extracellular side of the membrane. A helical transmembrane segment spans residues Thr83 to Phe103. The Cytoplasmic portion of the chain corresponds to Glu104 to Cys132. The chain crosses the membrane as a helical span at residues Leu133–Ile153. At Met154–Leu170 the chain is on the extracellular side. A helical membrane pass occupies residues Tyr171–Leu191. Over Asn192–Arg230 the chain is Cytoplasmic. A helical transmembrane segment spans residues Met231–Ile251. The Extracellular portion of the chain corresponds to Tyr252–Lys273. Residues Met274–Ile294 traverse the membrane as a helical segment. Residues Cys295–Cys350 lie on the Cytoplasmic side of the membrane. A helical membrane pass occupies residues Ala351 to Ile371. Residues Pro372–Gly373 lie on the Extracellular side of the membrane.

This sequence belongs to the insect chemoreceptor superfamily. Gustatory receptor (GR) family. Gr10a subfamily.

The protein localises to the cell membrane. In terms of biological role, probable gustatory receptor which mediates acceptance or avoidance behavior, depending on its substrates. This chain is Putative gustatory receptor 10b (Gr10b), found in Drosophila melanogaster (Fruit fly).